The chain runs to 241 residues: tRNA pseudouridine synthase A (241 aa).

Asp-52 (nucleophile) is an active-site residue. Tyr-110 serves as a coordination point for substrate.

The protein belongs to the tRNA pseudouridine synthase TruA family. In terms of assembly, homodimer.

It carries out the reaction uridine(38/39/40) in tRNA = pseudouridine(38/39/40) in tRNA. Its function is as follows. Formation of pseudouridine at positions 38, 39 and 40 in the anticodon stem and loop of transfer RNAs. In Aquifex aeolicus (strain VF5), this protein is tRNA pseudouridine synthase A.